The sequence spans 413 residues: Na(+)-translocating NADH-quinone reductase subunit B (413 aa).

3 helical membrane-spanning segments follow: residues 55–75 (IMIM…YNAG), 128–148 (FLPI…LFCM), and 163–183 (ILFA…LGIT). T235 is subject to FMN phosphoryl threonine. The next 5 helical transmembrane spans lie at 267–287 (IPGS…AMIV), 296–316 (IIAG…VIGS), 324–344 (MPWH…FMAT), 357–377 (WWYG…NPAY), and 380–400 (GMML…HVVI).

It belongs to the NqrB/RnfD family. In terms of assembly, composed of six subunits; NqrA, NqrB, NqrC, NqrD, NqrE and NqrF. The cofactor is FMN.

Its subcellular location is the cell inner membrane. It catalyses the reaction a ubiquinone + n Na(+)(in) + NADH + H(+) = a ubiquinol + n Na(+)(out) + NAD(+). Its function is as follows. NQR complex catalyzes the reduction of ubiquinone-1 to ubiquinol by two successive reactions, coupled with the transport of Na(+) ions from the cytoplasm to the periplasm. NqrA to NqrE are probably involved in the second step, the conversion of ubisemiquinone to ubiquinol. The protein is Na(+)-translocating NADH-quinone reductase subunit B of Vibrio campbellii (strain ATCC BAA-1116).